A 293-amino-acid chain; its full sequence is Diaminopimelate epimerase (293 aa).

Residues Asn13, Gln46, and Asn66 each coordinate substrate. The active-site Proton donor is Cys75. Substrate contacts are provided by residues 76–77 (GN), Asn162, Asn195, and 213–214 (ER). Cys222 serves as the catalytic Proton acceptor. 223–224 (GT) serves as a coordination point for substrate.

It belongs to the diaminopimelate epimerase family. As to quaternary structure, homodimer.

The protein localises to the cytoplasm. The catalysed reaction is (2S,6S)-2,6-diaminopimelate = meso-2,6-diaminopimelate. Its pathway is amino-acid biosynthesis; L-lysine biosynthesis via DAP pathway; DL-2,6-diaminopimelate from LL-2,6-diaminopimelate: step 1/1. In terms of biological role, catalyzes the stereoinversion of LL-2,6-diaminopimelate (L,L-DAP) to meso-diaminopimelate (meso-DAP), a precursor of L-lysine and an essential component of the bacterial peptidoglycan. The protein is Diaminopimelate epimerase of Psychrobacter sp. (strain PRwf-1).